Reading from the N-terminus, the 118-residue chain is Movement protein TGB2 (118 aa).

The Cytoplasmic portion of the chain corresponds to 1–11 (MSREITARPNK). A helical membrane pass occupies residues 12 to 32 (NVPIVVGVCVVAFFVLLAFMQ). Residues 33-81 (QKHKTHSGGDYGVPTFSNGGKYRDGTRSADFNSNNHRAYGCGGSGGSVS) are Lumenal-facing. The chain crosses the membrane as a helical span at residues 82–102 (SRVGQQLVVLAIVSVLIVSLL). The Cytoplasmic segment spans residues 103–118 (QRLRSPPEHICNGACG).

It belongs to the virgaviridae/benyvirus TGB2 movement protein family. In terms of assembly, interacts with movement protein TGB3.

Its subcellular location is the host cell junction. The protein localises to the host plasmodesma. It localises to the host endoplasmic reticulum membrane. In terms of biological role, participates in the transport of viral RNA to the plasmodesmata. Is probably targeted to plasmodesmata by TGBp3, along with viral RNAs-TGBp1 (RNP complex). Can gate plasmodesmata and increase their size exclusion limit. The polypeptide is Movement protein TGB2 (Beet necrotic yellow vein virus (isolate Japan/S) (BNYVV)).